The chain runs to 352 residues: MSRRFNPLEDPPSASSSDEEGKEIARNSSSDDEDDVSSENPSPLKTTLDAVSDSESGSDEETDSDSELEKKKDQVVTNPVDVKRAKKVKTSEKSGAKRSLEVDEAAVSMDVKRAKKVSGEEEKKKSGGGGEETKKTYFQRLWTEDDEIVVLQGLIDDKKDTGVSNTNKVYELVKKSISFDVSKNQLMEKLRALKKKYENNLGKAKDGVEPTFVKPHDRKAFELSKLVWGGIRMALASGMKSNEKSKKSSKFESVKHELDSSLPNSKNNCEDEVMDEGEVSFTKSSLVRSIVGLGMDELTAQQGLSKLASKDMKRFYEQWKAMQAREFEFFLQKHGFLFEVLSKISEAFGSNA.

Disordered stretches follow at residues 1 to 132 and 239 to 269; these read MSRR…GGEE and MKSN…KNNC. Positions 56-66 are enriched in acidic residues; that stretch reads SGSDEETDSDS. Basic and acidic residues-rich tracts occupy residues 89 to 101, 117 to 132, and 241 to 259; these read KTSE…RSLE, VSGE…GGEE, and SNEK…HELD.

This sequence belongs to the GeBP family.

This Arabidopsis thaliana (Mouse-ear cress) protein is Probable transcription factor At1g11510.